Reading from the N-terminus, the 255-residue chain is Methanethiol S-methyltransferase (255 aa).

The next 5 helical transmembrane spans lie at 16-36 (FVLL…VYAV), 56-76 (LVTA…QHSV), 99-119 (YVLF…PIGI), 131-151 (IIFY…TFLI), and 191-211 (VGWF…LVFA).

This sequence belongs to the nurim family.

The protein localises to the membrane. The catalysed reaction is methanethiol + S-adenosyl-L-methionine = dimethyl sulfide + S-adenosyl-L-homocysteine + H(+). Its function is as follows. Catalyzes the methylation of methanethiol (MeSH) to yield dimethylsulphide (DMS). This chain is Methanethiol S-methyltransferase, found in Crocosphaera subtropica (strain ATCC 51142 / BH68) (Cyanothece sp. (strain ATCC 51142)).